The primary structure comprises 187 residues: Orotate phosphoribosyltransferase (187 aa).

5-phospho-alpha-D-ribose 1-diphosphate-binding positions include Arg-103, Lys-104, Lys-107, and 129 to 137; that span reads EDVTTSGGS. Orotate contacts are provided by Thr-133 and Arg-161.

This sequence belongs to the purine/pyrimidine phosphoribosyltransferase family. PyrE subfamily. As to quaternary structure, homodimer. Mg(2+) serves as cofactor.

The catalysed reaction is orotidine 5'-phosphate + diphosphate = orotate + 5-phospho-alpha-D-ribose 1-diphosphate. It participates in pyrimidine metabolism; UMP biosynthesis via de novo pathway; UMP from orotate: step 1/2. Functionally, catalyzes the transfer of a ribosyl phosphate group from 5-phosphoribose 1-diphosphate to orotate, leading to the formation of orotidine monophosphate (OMP). This is Orotate phosphoribosyltransferase from Methanosarcina acetivorans (strain ATCC 35395 / DSM 2834 / JCM 12185 / C2A).